Consider the following 72-residue polypeptide: UPF0352 protein NTHI1007 (72 aa).

The protein belongs to the UPF0352 family.

The sequence is that of UPF0352 protein NTHI1007 from Haemophilus influenzae (strain 86-028NP).